Reading from the N-terminus, the 98-residue chain is MRTYEIMYVVRPNIEDEARKALVERFNGILTNDGAEIIEEKDWGKRRLAYEIEDFKEGYYYIVRINTENSEATDEFQRLAKINDDIIRYIVIREDEDK.

It belongs to the bacterial ribosomal protein bS6 family.

Binds together with bS18 to 16S ribosomal RNA. In Staphylococcus carnosus (strain TM300), this protein is Small ribosomal subunit protein bS6.